The primary structure comprises 555 residues: Glutamine--tRNA ligase (555 aa).

Residues P34–H44 carry the 'HIGH' region motif. Residues E35–N37 and H41–S47 contribute to the ATP site. Residues D67 and Y212 each contribute to the L-glutamine site. Residues T231, R261–L262, and M269–K271 contribute to the ATP site. The 'KMSKS' region signature appears at V268–R272. Residues T317 to E324 are interaction with tRNA.

This sequence belongs to the class-I aminoacyl-tRNA synthetase family. In terms of assembly, monomer.

It is found in the cytoplasm. The catalysed reaction is tRNA(Gln) + L-glutamine + ATP = L-glutaminyl-tRNA(Gln) + AMP + diphosphate. This is Glutamine--tRNA ligase from Salmonella paratyphi B (strain ATCC BAA-1250 / SPB7).